Here is a 322-residue protein sequence, read N- to C-terminus: Replication factor C small subunit 2 (322 aa).

G44–T51 is an ATP binding site.

The protein belongs to the activator 1 small subunits family. RfcS subfamily. As to quaternary structure, heteromultimer composed of small subunits (RfcS) and large subunits (RfcL).

Its function is as follows. Part of the RFC clamp loader complex which loads the PCNA sliding clamp onto DNA. This Pyrobaculum arsenaticum (strain DSM 13514 / JCM 11321 / PZ6) protein is Replication factor C small subunit 2.